Reading from the N-terminus, the 175-residue chain is Disulfide bond formation protein B (175 aa).

Over 1–13 (MTAFTRFAHSRAS) the chain is Cytoplasmic. A helical membrane pass occupies residues 14 to 30 (WLILTGSAIALEAAALY). Over 31–48 (FQYVMKLDPCVMCIYQRL) the chain is Periplasmic. Cysteines 40 and 43 form a disulfide. A helical transmembrane segment spans residues 49 to 64 (AVFGILAAGLIGMTAP). Over 65–71 (KYRIVRI) the chain is Cytoplasmic. Residues 72 to 89 (LGALGWAVSATWGLKLAL) form a helical membrane-spanning segment. The Periplasmic segment spans residues 90–144 (ALVDMQNNPSPFSTCSFLPEFPAWMPLHEWFPSVMLPTGMCTDVPWQFMGVTMAE). Cysteines 104 and 130 form a disulfide. The chain crosses the membrane as a helical span at residues 145-163 (WMVVAFSGYLVALLLFIVP). At 164 to 175 (ILSGSNKPSLYK) the chain is on the cytoplasmic side.

It belongs to the DsbB family.

It localises to the cell inner membrane. Functionally, required for disulfide bond formation in some periplasmic proteins. Acts by oxidizing the DsbA protein. The sequence is that of Disulfide bond formation protein B from Shewanella sp. (strain MR-4).